Reading from the N-terminus, the 251-residue chain is Small ribosomal subunit protein uS3 (251 aa).

One can recognise a KH type-2 domain in the interval 39 to 111 (IRELINNFSK…DVDLNILEVK (73 aa)).

The protein belongs to the universal ribosomal protein uS3 family. In terms of assembly, part of the 30S ribosomal subunit. Forms a tight complex with proteins S10 and S14.

Functionally, binds the lower part of the 30S subunit head. Binds mRNA in the 70S ribosome, positioning it for translation. The sequence is that of Small ribosomal subunit protein uS3 from Phytoplasma sp. (strain STRAWB1).